We begin with the raw amino-acid sequence, 881 residues long: Serine/threonine-protein kinase/endoribonuclease IRE1b (881 aa).

Positions 1–21 are cleaved as a signal peptide; that stretch reads MRGSALLDLILFLLVSPLAHS. Residues 22–357 are Lumenal-facing; sequence FKGSEISKFY…KQAGFASKFS (336 aa). N-linked (GlcNAc...) asparagine glycosylation is present at Asn115. Residues 358–378 form a helical membrane-spanning segment; sequence GLIVLIFGFCVTMLSVCGLFF. Over 379 to 881 the chain is Cytoplasmic; the sequence is YRLRQSIRIK…FFKYSKTTVF (503 aa). Residues 459–744 enclose the Protein kinase domain; the sequence is FVSNKEIAKG…AQDVMHHPLF (286 aa). ATP-binding positions include 465–473 and Lys487; that span reads IAKGSNGTV. Residues 481-502 are ATP selon article; sequence GRLVAVKRLVQSHHDVAQKEIL. Asp608 serves as the catalytic Proton acceptor. Residues 642-661 are disordered; the sequence is LTRNSTGLGSGSSGWQAPEQ. The 132-residue stretch at 747–878 folds into the KEN domain; the sequence is SDMRLSFLRD…EEFFFKYSKT (132 aa).

Belongs to the protein kinase superfamily. Ser/Thr protein kinase family. Homodimer; disulfide-linked. Dimer formation is driven by hydrophobic interactions within the N-terminal luminal domains and stabilized by disulfide bridges. The cofactor is Mg(2+). In terms of processing, autophosphorylated. Ubiquitous. Detected in the apical meristem, at leaf margins where vascular bundles end, in the anthers before pollen is formed and in the ovules at a very early stage of development. There is no expression in more mature embryos. Also strongly expressed in the cotyledons immediately after germination but not later on.

Its subcellular location is the endoplasmic reticulum membrane. The enzyme catalyses L-seryl-[protein] + ATP = O-phospho-L-seryl-[protein] + ADP + H(+). The catalysed reaction is L-threonyl-[protein] + ATP = O-phospho-L-threonyl-[protein] + ADP + H(+). Its activity is regulated as follows. The kinase domain is activated by trans-autophosphorylation. Kinase activity is required for activation of the endoribonuclease domain. Functionally, senses unfolded proteins in the lumen of the endoplasmic reticulum via its N-terminal domain which leads to enzyme auto-activation. The active endoribonuclease domain splices bZIP60 mRNA to generate a new C-terminus, converting it into a potent unfolded-protein response transcriptional activator which then induces transcription of UPR target genes. Involved in organ growth regulation. Plays a role in plant immunity and abiotic stress responses. Required for ER stress-induced autophagy. The protein is Serine/threonine-protein kinase/endoribonuclease IRE1b (IRE1B) of Arabidopsis thaliana (Mouse-ear cress).